The sequence spans 330 residues: D-lactate dehydrogenase (330 aa).

NAD(+) is bound by residues 156–157 (RI), aspartate 176, 206–207 (VP), 233–235 (AAR), and aspartate 259. Arginine 235 is a catalytic residue. Glutamate 264 is an active-site residue. Histidine 296 serves as the catalytic Proton donor.

It belongs to the D-isomer specific 2-hydroxyacid dehydrogenase family.

The enzyme catalyses (R)-lactate + NAD(+) = pyruvate + NADH + H(+). The sequence is that of D-lactate dehydrogenase (ldhD) from Staphylococcus aureus (strain Mu50 / ATCC 700699).